The primary structure comprises 218 residues: MKTHELKASPRTTRGNGPARALRREGFIPAVLYGPDSEPITLSVSHKDLSDILQGVGSSQVMFNLNIEGADAPRKAMIKELQTNVVSQRYLHADFYEISMDRKLHVMVPVVVEGKSKGMEEGGLLQVIRRELEVICLPGDIPEEFVIDVTELGIGEAVHLSDVPKGDAVEFPESADFTVVTVVAPTAAALPEEGEEGEEGEEGGEGGEAEGAEAASEE.

Disordered stretches follow at residues 1–20 and 185–218; these read MKTHELKASPRTTRGNGPAR and PTAAALPEEGEEGEEGEEGGEGGEAEGAEAASEE. A compositionally biased stretch (acidic residues) spans 192 to 218; that stretch reads EEGEEGEEGEEGGEGGEAEGAEAASEE.

It belongs to the bacterial ribosomal protein bL25 family. CTC subfamily. In terms of assembly, part of the 50S ribosomal subunit; part of the 5S rRNA/L5/L18/L25 subcomplex. Contacts the 5S rRNA. Binds to the 5S rRNA independently of L5 and L18.

This is one of the proteins that binds to the 5S RNA in the ribosome where it forms part of the central protuberance. The chain is Large ribosomal subunit protein bL25 from Desulfatibacillum aliphaticivorans.